Consider the following 619-residue polypeptide: Kinesin light chain 4 (619 aa).

N-acetylserine is present on Ser-2. A TPR 1 repeat occupies 55 to 88 (QQGGHEEGLVHEKARQLRRSMENIELGLSEAQVM). Residues 65 to 155 (HEKARQLRRS…HLEFLRQLRQ (91 aa)) are a coiled coil. The span at 156 to 175 (YDEDGHGMEEKEGEATKDSL) shows a compositional bias: basic and acidic residues. Residues 156–199 (YDEDGHGMEEKEGEATKDSLDDLFPNEEEEDSGNDLSRGQGAAA) are disordered. Residue Ser-174 is modified to Phosphoserine. Residues 179-188 (FPNEEEEDSG) are compositionally biased toward acidic residues. 5 TPR repeats span residues 211-244 (LRTL…LERT), 253-286 (ATML…REST), 295-328 (AATL…REKV), 337-370 (AKQL…YESQ), and 379-412 (ARTK…AHVQ). Position 460 is a phosphoserine (Ser-460). The TPR 7 repeat unit spans residues 464-497 (NTTLKNLGALYRRQGKLEAAETLEECALRSRKQG). Ser-565, Ser-566, and Ser-590 each carry phosphoserine. The tract at residues 571 to 619 (RKLQGTEPRPSSSSMKRAASLNYLNQPNAAPLQVSRGLSASTVDLSSSS) is disordered. Positions 609–619 (SASTVDLSSSS) are enriched in low complexity. A Phosphothreonine modification is found at Thr-612.

Belongs to the kinesin light chain family. As to quaternary structure, oligomeric complex composed of two heavy chains and two light chains.

It is found in the cytoplasm. The protein resides in the cytoskeleton. Functionally, kinesin is a microtubule-associated force-producing protein that may play a role in organelle transport. The light chain may function in coupling of cargo to the heavy chain or in the modulation of its ATPase activity. This is Kinesin light chain 4 (Klc4) from Mus musculus (Mouse).